The sequence spans 185 residues: Meiotic recombination protein REC104 (185 aa).

The segment at Ala146–Val168 is disordered.

In terms of biological role, potential transcriptional regulator that is required to activate expression of a number of early meiotic genes including HOP1. This Saccharomyces pastorianus (Lager yeast) protein is Meiotic recombination protein REC104 (REC104).